Consider the following 623-residue polypeptide: UvrABC system protein C (623 aa).

One can recognise a GIY-YIG domain in the interval 21 to 100 (AEPGVYLMRD…IKTHQPPYNV (80 aa)). The 36-residue stretch at 210–245 (DELIRELQEKMIQAAEQENYEAAARYRDQIRGLEQL) folds into the UVR domain.

The protein belongs to the UvrC family. Interacts with UvrB in an incision complex.

It is found in the cytoplasm. The UvrABC repair system catalyzes the recognition and processing of DNA lesions. UvrC both incises the 5' and 3' sides of the lesion. The N-terminal half is responsible for the 3' incision and the C-terminal half is responsible for the 5' incision. In Synechococcus sp. (strain JA-2-3B'a(2-13)) (Cyanobacteria bacterium Yellowstone B-Prime), this protein is UvrABC system protein C.